A 270-amino-acid polypeptide reads, in one-letter code: Aliphatic sulfonates import ATP-binding protein SsuB 2 (270 aa).

Residues 17–241 (LLDLRIARKL…PRDRRDPSLA (225 aa)) enclose the ABC transporter domain. ATP is bound at residue 50–57 (GPSGCGKS).

This sequence belongs to the ABC transporter superfamily. Aliphatic sulfonates importer (TC 3.A.1.17.2) family. As to quaternary structure, the complex is composed of two ATP-binding proteins (SsuB), two transmembrane proteins (SsuC) and a solute-binding protein (SsuA).

Its subcellular location is the cell inner membrane. It carries out the reaction ATP + H2O + aliphatic sulfonate-[sulfonate-binding protein]Side 1 = ADP + phosphate + aliphatic sulfonateSide 2 + [sulfonate-binding protein]Side 1.. Its function is as follows. Part of the ABC transporter complex SsuABC involved in aliphatic sulfonates import. Responsible for energy coupling to the transport system. The sequence is that of Aliphatic sulfonates import ATP-binding protein SsuB 2 from Burkholderia cenocepacia (strain HI2424).